The following is a 240-amino-acid chain: MNERSTPQALTGPVIRAERLGKTYSEGKLLTQVFDGLDLQVMRGETVAIVGASGAGKSTLLHLLGGLDVPTAGEVYVAGQRMSALSDGDRGRLRNKTLGFIYQFHHLLPEFTALENVMMPVLLSGQSVCSGQMRAQMLLEAVELGHRLNYKPSELSGGERQRAAVARALANSPDCVLGDEPTGNLDNRTASTVFELMLELNRAQRTSLVLVTHDRGLARCLDRVLELYQGGLRELTSAEV.

Positions I15 to V240 constitute an ABC transporter domain. G51–S58 lines the ATP pocket.

The protein belongs to the ABC transporter superfamily. Lipoprotein translocase (TC 3.A.1.125) family. As to quaternary structure, the complex is composed of two ATP-binding proteins (LolD) and two transmembrane proteins (LolC and LolE).

The protein localises to the cell inner membrane. Functionally, part of the ABC transporter complex LolCDE involved in the translocation of mature outer membrane-directed lipoproteins, from the inner membrane to the periplasmic chaperone, LolA. Responsible for the formation of the LolA-lipoprotein complex in an ATP-dependent manner. The chain is Lipoprotein-releasing system ATP-binding protein LolD from Xylella fastidiosa (strain 9a5c).